We begin with the raw amino-acid sequence, 746 residues long: H(+)/Cl(-) exchange transporter 5 (746 aa).

The Cytoplasmic segment spans residues 1-54; the sequence is MDFLEEPIPGVGTYDDFNTIDWVREKSRDRDRHREITNRSKESTWALIHSVSDA. 2 helical membrane-spanning segments follow: residues 55-92 and 138-161; these read FSGW…ICTE and VNYF…VKVF. The short motif at 167 to 171 is the Selectivity filter part_1 element; the sequence is GSGIP. S168 contributes to the chloride binding site. The helical intramembrane region spans 170–177; sequence IPEIKTIL. Transmembrane regions (helical) follow at residues 186–205 and 211–230; these read LGKW…VSSG and EGPL…HCFN. The Selectivity filter part_2 motif lies at 209-213; sequence GKEGP. 2 intramembrane regions (helical) span residues 242 to 254 and 258 to 266; these read VLSA…VSVA and PIGGVLFSL. 5 consecutive transmembrane segments (helical) span residues 278–296, 319–344, 352–372, 428–448, and 453–472; these read LWRS…RSIN, LVPF…IAWC, LGKY…ILAF, MWQL…TFGM, and GLFI…LGVG. The Selectivity filter part_3 motif lies at 453 to 457; that stretch reads GLFIP. F455 provides a ligand contact to chloride. The segment at residues 500–514 is an intramembrane region (helical); it reads GLYAMVGAAACLGGV. An intramembrane region (note=Loop between two helices) is located at residues 515 to 517; the sequence is TRM. The segment at residues 518 to 529 is an intramembrane region (helical); sequence TVSLVVIMFELT. The segment at residues 530–534 is an intramembrane region (note=Loop between two helices); sequence GGLEY. Residues 535–552 traverse the membrane as a helical segment; the sequence is IVPLMAAAMTSKWVADAL. Over 553-746 the chain is Cytoplasmic; it reads GREGIYDAHI…NQDPDSILFN (194 aa). Residue Y558 participates in chloride binding. 2 consecutive CBS domains span residues 586–650 and 682–742; these read MKPR…ARKE and ILDL…DPDS. Residues T596, 617–619, and 724–727 each bind ATP; these read YSG and TKKD.

Belongs to the chloride channel (TC 2.A.49) family. ClC-5/CLCN5 subfamily. As to quaternary structure, interacts with NEDD4 and NEDD4L. Ubiquitinated by NEDD4L in the presence of albumin; which promotes endocytosis and proteasomal degradation. Detected in duodenum, jejunum and ileum. Detected in crypt and villus regions of the epithelium of the small intestine.

It is found in the golgi apparatus membrane. The protein resides in the endosome membrane. It localises to the cell membrane. It carries out the reaction 2 chloride(in) + H(+)(out) = 2 chloride(out) + H(+)(in). Functionally, proton-coupled chloride transporter. Functions as antiport system and exchanges chloride ions against protons. Important for normal acidification of the endosome lumen. May play an important role in renal tubular function. The CLC channel family contains both chloride channels and proton-coupled anion transporters that exchange chloride or another anion for protons. The absence of conserved gating glutamate residues is typical for family members that function as channels. The polypeptide is H(+)/Cl(-) exchange transporter 5 (CLCN5) (Cavia porcellus (Guinea pig)).